We begin with the raw amino-acid sequence, 145 residues long: MSRILGLDIGLKRIGVAVSDPFGVTATPLEFILNDEKVFEKINDLIKNYKISKIVIGLPLTLKGEEGEQARYTKEFVENLKNHIPQDIEIIFVDERFTSSLAEKTLLQTKKKNKKEKIDSLSAVFILQTYLDRLSFSNEATNYSY.

It belongs to the YqgF nuclease family.

The protein resides in the cytoplasm. Its function is as follows. Could be a nuclease involved in processing of the 5'-end of pre-16S rRNA. In Sulfurihydrogenibium sp. (strain YO3AOP1), this protein is Putative pre-16S rRNA nuclease.